The chain runs to 496 residues: L-arabinose isomerase (496 aa).

The Mn(2+) site is built by Glu302, Glu329, His346, and His445.

It belongs to the arabinose isomerase family. The cofactor is Mn(2+).

It catalyses the reaction beta-L-arabinopyranose = L-ribulose. It functions in the pathway carbohydrate degradation; L-arabinose degradation via L-ribulose; D-xylulose 5-phosphate from L-arabinose (bacterial route): step 1/3. Its function is as follows. Catalyzes the conversion of L-arabinose to L-ribulose. This chain is L-arabinose isomerase, found in Thermotoga petrophila (strain ATCC BAA-488 / DSM 13995 / JCM 10881 / RKU-1).